The sequence spans 518 residues: GMP synthase [glutamine-hydrolyzing] (518 aa).

Residues 11 to 203 enclose the Glutamine amidotransferase type-1 domain; the sequence is KIIVLDFGSQ…AFDVCQARSN (193 aa). The active-site Nucleophile is Cys88. Catalysis depends on residues His177 and Glu179. Residues 204 to 393 enclose the GMPS ATP-PPase domain; the sequence is WSMDDFIDMQ…LGMPHELVWR (190 aa). Position 231 to 237 (231 to 237) interacts with ATP; sequence SGGVDSS.

In terms of assembly, homodimer.

The catalysed reaction is XMP + L-glutamine + ATP + H2O = GMP + L-glutamate + AMP + diphosphate + 2 H(+). It functions in the pathway purine metabolism; GMP biosynthesis; GMP from XMP (L-Gln route): step 1/1. In terms of biological role, catalyzes the synthesis of GMP from XMP. The polypeptide is GMP synthase [glutamine-hydrolyzing] (Ligilactobacillus salivarius (strain UCC118) (Lactobacillus salivarius)).